Consider the following 211-residue polypeptide: Small ribosomal subunit protein uS5 (211 aa).

Residues 50 to 113 form the S5 DRBM domain; it reads LEDEVLDINM…DNAKINITRI (64 aa).

This sequence belongs to the universal ribosomal protein uS5 family. Part of the 30S ribosomal subunit. Contacts protein S4.

With S4 and S12 plays an important role in translational accuracy. The sequence is that of Small ribosomal subunit protein uS5 from Methanococcoides burtonii (strain DSM 6242 / NBRC 107633 / OCM 468 / ACE-M).